The sequence spans 369 residues: Fructose-bisphosphate aldolase (369 aa).

Residue aspartate 40 participates in dihydroxyacetone phosphate binding. D-glyceraldehyde 3-phosphate is bound by residues serine 42 and threonine 45. Beta-D-fructose 1,6-bisphosphate is bound at residue arginine 49. D-glyceraldehyde 3-phosphate is bound at residue lysine 113. Lysine 152 contributes to the dihydroxyacetone phosphate binding site. Glutamate 195 is a binding site for D-glyceraldehyde 3-phosphate. Residue glutamate 195 is the Proton acceptor of the active site. Dihydroxyacetone phosphate-binding residues include lysine 237, serine 279, and glycine 280. Catalysis depends on lysine 237, which acts as the Schiff-base intermediate with dihydroxyacetone phosphate. Beta-D-fructose 1,6-bisphosphate is bound by residues serine 279–glycine 281 and serine 307. Glycine 309 and arginine 310 together coordinate dihydroxyacetone phosphate. Arginine 310 serves as a coordination point for beta-D-fructose 1,6-bisphosphate.

It belongs to the class I fructose-bisphosphate aldolase family. Homotetramer. Interacts with TRAP (via cytoplasmic domain); the interaction prevents substrate binding and thereby inhibits aldolase activity. Interacts with MTRAP (via cytoplasmic domain); MTRAP phosphorylation may increase the binding to FBPA. Interact with RH1 (via cytoplasmic domain). Interacts with RH2b (via cytoplasmic domain). Interacts with RH4 (via cytoplasmic domain). Interacts with AMA1 (via cytoplasmic domain); the interaction is weak, however it may be increased upon AMA1 phosphorylation. Interacts with EBA140 (via cytoplasmic domain); the interaction is weak. Interacts with EBA175 (via cytoplasmic domain); the interaction is weak. Interacts with EBA181 (via cytoplasmic domain); the interaction is weak. Interacts with G-actin and F-actin. May interact with ACT2/actin II; the interaction inhibits FBPA catalytic activity. Interacts with human SLC4A1/band 3 (via N-terminus); the interaction inhibits FBPA catalytic activity.

It localises to the cytoplasm. It is found in the membrane. Its subcellular location is the host cell membrane. It catalyses the reaction beta-D-fructose 1,6-bisphosphate = D-glyceraldehyde 3-phosphate + dihydroxyacetone phosphate. The protein operates within carbohydrate degradation; glycolysis; D-glyceraldehyde 3-phosphate and glycerone phosphate from D-glucose: step 4/4. Its activity is regulated as follows. The cytoplasmic tail of TRAP and probably other adhesins acts as a competitive inhibitor as the binding sites of the glycolytic substrate fructose 1,6-bisphosphate and TRAP partially overlap. Functionally, plays a key role in glycolysis by catalyzing the cleavage of fructose 1,6-bisphosphate into dihydroxyacetone phosphate and glyceraldehyde 3-phosphate. Independently of its catalytic activity, connects the actin filaments, and thus the actomyosin motor, to cell surface adhesins of the thrombospondin-related anonymous protein (TRAP), the erythrocyte binding ligand (EBL) and reticulocyte binding homolog (RH) protein families; this interaction is probably involved in transducing the motor force across the parasite surface required for sporozoite and ookinete gliding motility and merozoite invasion. Stimulates actin polymerisation. This chain is Fructose-bisphosphate aldolase, found in Plasmodium falciparum (isolate 3D7).